The primary structure comprises 601 residues: Sodium-dependent phosphate transport protein 2C (601 aa).

Residues 1-75 (MPNSLAGDQV…HQVVSGFLKA (75 aa)) lie on the Cytoplasmic side of the membrane. The residue at position 4 (serine 4) is a Phosphoserine. The helical transmembrane segment at 76-96 (CGLLGSLYFFICSLDILSSAF) threads the bilayer. At 97–110 (QLLGSKMAGDIFKD) the chain is on the extracellular side. Residues 111-131 (NVVLSNPVAGLVIGVVVTVLV) form a helical membrane-spanning segment. Topologically, residues 132–187 (QSSSTSSSIVVSMVASKSLTVQASVPIIMGVNVGTSITSTLVSMAQSGDRDEFQRA) are cytoplasmic. A helical membrane pass occupies residues 188-208 (FGGSAVHGIFNWLTVLVLLPL). The Extracellular portion of the chain corresponds to 209–324 (ENATAALERL…FAGSELTDLA (116 aa)). N-linked (GlcNAc...) asparagine glycosylation is found at asparagine 210, asparagine 264, asparagine 267, and asparagine 299. A disulfide bond links cysteine 275 and cysteine 311. The helical transmembrane segment at 325–345 (VGFILLAGSLLVLCVCLVLIV) threads the bilayer. The Cytoplasmic segment spans residues 346–369 (KLLNSVLRGRIAQAVKTVINADFP). Residues 370-390 (FPFGWLSGYLAILVGAGLTFL) form a helical membrane-spanning segment. At 391 to 447 (LQSSSVFTAAIVPLMGVGVINLERAYPLFLGSNIGTTTTALLAALASPADTLLFAVQ) the chain is on the extracellular side. Residues 448–468 (VALIHFFFNLAGILLWYLVPV) traverse the membrane as a helical segment. Over 469 to 487 (LRLPIPLAKRFGDLTAQYR) the chain is Cytoplasmic. A helical transmembrane segment spans residues 488–508 (WVAIVYLLLTFLLLPLAAFGL). Over 509 to 512 (SLAG) the chain is Extracellular. A helical transmembrane segment spans residues 513–533 (GSVLAAVGGPLVGLVLLIILV). Residues 534-601 (NVLQRHRPSW…NPQVIASQQL (68 aa)) are Cytoplasmic-facing.

It belongs to the SLC34A transporter family. Highly expressed in the kidney. Not found in any of the other tested tissues.

It localises to the apical cell membrane. The catalysed reaction is 2 Na(+)(out) + phosphate(out) = 2 Na(+)(in) + phosphate(in). Its function is as follows. Involved in actively transporting phosphate into cells via Na(+) cotransport in the renal brush border membrane. The cotransport has a Na(+):Pi stoichiometry of 2:1 and is electroneutral. This chain is Sodium-dependent phosphate transport protein 2C (Slc34a3), found in Rattus norvegicus (Rat).